The following is a 387-amino-acid chain: Protein mab-21-like 3 (387 aa).

Belongs to the mab-21 family.

In Danio rerio (Zebrafish), this protein is Protein mab-21-like 3 (mab21L3).